The chain runs to 106 residues: Large ribosomal subunit protein uL24 (106 aa).

It belongs to the universal ribosomal protein uL24 family. In terms of assembly, part of the 50S ribosomal subunit.

Its function is as follows. One of two assembly initiator proteins, it binds directly to the 5'-end of the 23S rRNA, where it nucleates assembly of the 50S subunit. In terms of biological role, one of the proteins that surrounds the polypeptide exit tunnel on the outside of the subunit. In Acidiphilium cryptum (strain JF-5), this protein is Large ribosomal subunit protein uL24.